We begin with the raw amino-acid sequence, 324 residues long: Brorin (324 aa).

An N-terminal signal peptide occupies residues 1 to 27 (MPSSSAMAVGALSSSLLVTCCLMVALC). The segment at 37–126 (AQAPEQPGQE…TPQGEPPAAA (90 aa)) is disordered. Composition is skewed to basic and acidic residues over residues 44–56 (GQEK…RDSP) and 64–78 (RASR…DWKS). Over residues 92–107 (KQKQAWAAQGGSAKAA) the composition is skewed to low complexity. Residues 114–116 (RGD) carry the Mediates cell adhesion motif. 2 VWFC domains span residues 152-211 (KGCV…PQCK) and 215-273 (NYCE…PICK).

As to quaternary structure, peripherally associated with AMPAR complex. AMPAR complex consists of an inner core made of 4 pore-forming GluA/GRIA proteins (GRIA1, GRIA2, GRIA3 and GRIA4) and 4 major auxiliary subunits arranged in a twofold symmetry. One of the two pairs of distinct binding sites is occupied either by CNIH2, CNIH3 or CACNG2, CACNG3. The other harbors CACNG2, CACNG3, CACNG4, CACNG8 or GSG1L. This inner core of AMPAR complex is complemented by outer core constituents binding directly to the GluA/GRIA proteins at sites distinct from the interaction sites of the inner core constituents. Outer core constituents include at least PRRT1, PRRT2, CKAMP44/SHISA9, FRRS1L and NRN1. The proteins of the inner and outer core serve as a platform for other, more peripherally associated AMPAR constituents, including VWC2. Alone or in combination, these auxiliary subunits control the gating and pharmacology of the AMPAR complex and profoundly impact their biogenesis and protein processing. As to expression, predominantly expressed in the brain (at protein level). It is expressed in the neurons but not the glial cells.

The protein resides in the secreted. It localises to the extracellular space. The protein localises to the extracellular matrix. It is found in the basement membrane. Its subcellular location is the synapse. BMP antagonist which may play a role in neural development. Promotes cell adhesion. The chain is Brorin (Vwc2) from Mus musculus (Mouse).